A 94-amino-acid chain; its full sequence is Acylphosphatase (94 aa).

An Acylphosphatase-like domain is found at 8–94; that stretch reads ALHVIVKGRV…RGYTDFRIEV (87 aa). Residues Arg-23 and Asn-41 contribute to the active site.

The protein belongs to the acylphosphatase family.

It carries out the reaction an acyl phosphate + H2O = a carboxylate + phosphate + H(+). The chain is Acylphosphatase (acyP) from Treponema denticola (strain ATCC 35405 / DSM 14222 / CIP 103919 / JCM 8153 / KCTC 15104).